The chain runs to 278 residues: Rhamnulose-1-phosphate aldolase (278 aa).

E116 is an active-site residue. Zn(2+) is bound by residues H139, H141, and H210.

This sequence belongs to the aldolase class II family. RhaD subfamily. Zn(2+) is required as a cofactor.

It is found in the cytoplasm. The enzyme catalyses L-rhamnulose 1-phosphate = (S)-lactaldehyde + dihydroxyacetone phosphate. Its pathway is carbohydrate degradation; L-rhamnose degradation; glycerone phosphate from L-rhamnose: step 3/3. Its function is as follows. Catalyzes the reversible cleavage of L-rhamnulose-1-phosphate to dihydroxyacetone phosphate (DHAP) and L-lactaldehyde. This is Rhamnulose-1-phosphate aldolase from Listeria welshimeri serovar 6b (strain ATCC 35897 / DSM 20650 / CCUG 15529 / CIP 8149 / NCTC 11857 / SLCC 5334 / V8).